Consider the following 258-residue polypeptide: uncharacterized protein (258 aa).

Residues 16–148 (EAFDSFEYAE…VLRALNFDTH (133 aa)) enclose the Cyclin N-terminal domain.

Belongs to the cyclin family. Cyclin L subfamily.

It is found in the cytoplasm. It localises to the nucleus. This is an uncharacterized protein from Schizosaccharomyces pombe (strain 972 / ATCC 24843) (Fission yeast).